Reading from the N-terminus, the 378-residue chain is Queuine tRNA-ribosyltransferase (378 aa).

The active-site Proton acceptor is the Asp-89. Residues 89–93 (DSGGF), Asp-143, Gln-194, and Gly-221 each bind substrate. The segment at 252–258 (GVGTPAN) is RNA binding. Asp-271 serves as the catalytic Nucleophile. Zn(2+)-binding residues include Cys-309, Cys-311, Cys-314, and His-340.

This sequence belongs to the queuine tRNA-ribosyltransferase family. Homodimer. Within each dimer, one monomer is responsible for RNA recognition and catalysis, while the other monomer binds to the replacement base PreQ1. Requires Zn(2+) as cofactor.

It catalyses the reaction 7-aminomethyl-7-carbaguanine + guanosine(34) in tRNA = 7-aminomethyl-7-carbaguanosine(34) in tRNA + guanine. The protein operates within tRNA modification; tRNA-queuosine biosynthesis. Functionally, catalyzes the base-exchange of a guanine (G) residue with the queuine precursor 7-aminomethyl-7-deazaguanine (PreQ1) at position 34 (anticodon wobble position) in tRNAs with GU(N) anticodons (tRNA-Asp, -Asn, -His and -Tyr). Catalysis occurs through a double-displacement mechanism. The nucleophile active site attacks the C1' of nucleotide 34 to detach the guanine base from the RNA, forming a covalent enzyme-RNA intermediate. The proton acceptor active site deprotonates the incoming PreQ1, allowing a nucleophilic attack on the C1' of the ribose to form the product. After dissociation, two additional enzymatic reactions on the tRNA convert PreQ1 to queuine (Q), resulting in the hypermodified nucleoside queuosine (7-(((4,5-cis-dihydroxy-2-cyclopenten-1-yl)amino)methyl)-7-deazaguanosine). This chain is Queuine tRNA-ribosyltransferase, found in Lachnospira eligens (strain ATCC 27750 / DSM 3376 / VPI C15-48 / C15-B4) (Eubacterium eligens).